The sequence spans 395 residues: Pyridinium-3,5-bisthiocarboxylic acid mononucleotide nickel insertion protein (395 aa).

Belongs to the LarC family.

It catalyses the reaction Ni(II)-pyridinium-3,5-bisthiocarboxylate mononucleotide = pyridinium-3,5-bisthiocarboxylate mononucleotide + Ni(2+). Its function is as follows. Involved in the biosynthesis of a nickel-pincer cofactor ((SCS)Ni(II) pincer complex). Binds Ni(2+), and functions in nickel delivery to pyridinium-3,5-bisthiocarboxylic acid mononucleotide (P2TMN), to form the mature cofactor. Is thus probably required for the activation of nickel-pincer cofactor-dependent enzymes. This chain is Pyridinium-3,5-bisthiocarboxylic acid mononucleotide nickel insertion protein, found in Staphylococcus epidermidis (strain ATCC 35984 / DSM 28319 / BCRC 17069 / CCUG 31568 / BM 3577 / RP62A).